The sequence spans 329 residues: GTP 3',8-cyclase (329 aa).

Residues 8–229 (AFARTFYYLR…AGWQRRLPGR (222 aa)) form the Radical SAM core domain. GTP is bound at residue Arg17. [4Fe-4S] cluster is bound by residues Cys24 and Cys28. Residue Tyr30 coordinates S-adenosyl-L-methionine. Cys31 serves as a coordination point for [4Fe-4S] cluster. Arg68 contributes to the GTP binding site. Gly72 contacts S-adenosyl-L-methionine. Residue Thr99 coordinates GTP. Residue Ser123 coordinates S-adenosyl-L-methionine. Position 160 (Lys160) interacts with GTP. Residue Met194 participates in S-adenosyl-L-methionine binding. The [4Fe-4S] cluster site is built by Cys257 and Cys260. 262 to 264 (RLR) contacts GTP. [4Fe-4S] cluster is bound at residue Cys274.

It belongs to the radical SAM superfamily. MoaA family. Monomer and homodimer. [4Fe-4S] cluster is required as a cofactor.

It carries out the reaction GTP + AH2 + S-adenosyl-L-methionine = (8S)-3',8-cyclo-7,8-dihydroguanosine 5'-triphosphate + 5'-deoxyadenosine + L-methionine + A + H(+). Its pathway is cofactor biosynthesis; molybdopterin biosynthesis. Functionally, catalyzes the cyclization of GTP to (8S)-3',8-cyclo-7,8-dihydroguanosine 5'-triphosphate. The protein is GTP 3',8-cyclase of Edwardsiella ictaluri (strain 93-146).